The primary structure comprises 486 residues: UDP-N-acetylmuramate--L-alanine ligase (486 aa).

123 to 129 (GTHGKTT) is an ATP binding site.

Belongs to the MurCDEF family.

The protein localises to the cytoplasm. It carries out the reaction UDP-N-acetyl-alpha-D-muramate + L-alanine + ATP = UDP-N-acetyl-alpha-D-muramoyl-L-alanine + ADP + phosphate + H(+). The protein operates within cell wall biogenesis; peptidoglycan biosynthesis. Functionally, cell wall formation. The polypeptide is UDP-N-acetylmuramate--L-alanine ligase (Pseudomonas savastanoi pv. phaseolicola (strain 1448A / Race 6) (Pseudomonas syringae pv. phaseolicola (strain 1448A / Race 6))).